The sequence spans 309 residues: Lactamase-like protein aptB (309 aa).

Zn(2+)-binding residues include H97, H99, D101, and H102. Catalysis depends on D101, which acts as the Proton donor/acceptor.

It belongs to the metallo-beta-lactamase superfamily. Zn(2+) is required as a cofactor.

The enzyme catalyses 2,3,6,8,9-pentahydroxy-1-oxo-3-(2-oxopropyl)-1,2,3,4-tetrahydroanthracene-2-carboxyl-[ACP] + H2O = 2,3,6,8,9-pentahydroxy-1-oxo-3-(2-oxopropyl)-1,2,3,4-tetrahydroanthracene-2-carboxylate + holo-[ACP] + H(+). Its pathway is secondary metabolite biosynthesis. Its function is as follows. Lactamase-like protein; part of the gene cluster that mediates the biosynthesis of asperthecin, an anthraquinone pigment. Polyketide synthase (PKS) aptA catalyzes the formation of the aromatic polyketide from acetyl coenzyme A and seven malonyl coenzyme A molecules. Polyketide is subsequently hydrolyzed by the action of aptB into endocrocin-9-anthrone. Endocrocin-9-anthrone is then oxidized into endocrocin by aptC. Endocrocin is likely to decarboxylate spontaneously to form emodin which explains why there is no decarboxylase in the asperthecin biosynthesis cluster. Finally, aptC or another endogenous oxygenase catalyzes additional oxidation steps to form asperthecin. The polypeptide is Lactamase-like protein aptB (Emericella nidulans (strain FGSC A4 / ATCC 38163 / CBS 112.46 / NRRL 194 / M139) (Aspergillus nidulans)).